The sequence spans 226 residues: Large ribosomal subunit protein uL1 (226 aa).

The protein belongs to the universal ribosomal protein uL1 family. In terms of assembly, part of the 50S ribosomal subunit.

Binds directly to 23S rRNA. The L1 stalk is quite mobile in the ribosome, and is involved in E site tRNA release. Functionally, protein L1 is also a translational repressor protein, it controls the translation of the L11 operon by binding to its mRNA. This chain is Large ribosomal subunit protein uL1, found in Borreliella burgdorferi (strain ZS7) (Borrelia burgdorferi).